A 299-amino-acid polypeptide reads, in one-letter code: Bifunctional protein FolD 2 (299 aa).

Residues G168–S170, S193, and I234 each bind NADP(+).

This sequence belongs to the tetrahydrofolate dehydrogenase/cyclohydrolase family. Homodimer.

The enzyme catalyses (6R)-5,10-methylene-5,6,7,8-tetrahydrofolate + NADP(+) = (6R)-5,10-methenyltetrahydrofolate + NADPH. It carries out the reaction (6R)-5,10-methenyltetrahydrofolate + H2O = (6R)-10-formyltetrahydrofolate + H(+). Its pathway is one-carbon metabolism; tetrahydrofolate interconversion. In terms of biological role, catalyzes the oxidation of 5,10-methylenetetrahydrofolate to 5,10-methenyltetrahydrofolate and then the hydrolysis of 5,10-methenyltetrahydrofolate to 10-formyltetrahydrofolate. This chain is Bifunctional protein FolD 2, found in Rhizobium etli (strain ATCC 51251 / DSM 11541 / JCM 21823 / NBRC 15573 / CFN 42).